A 100-amino-acid chain; its full sequence is Small ribosomal subunit protein uS14c (100 aa).

It belongs to the universal ribosomal protein uS14 family. As to quaternary structure, part of the 30S ribosomal subunit.

Its subcellular location is the plastid. It localises to the chloroplast. Its function is as follows. Binds 16S rRNA, required for the assembly of 30S particles. The sequence is that of Small ribosomal subunit protein uS14c from Ceratophyllum demersum (Rigid hornwort).